Reading from the N-terminus, the 240-residue chain is MVSPVTVVKSEGPKLVPFFKATCVYFVLWLPSSSPSWVSTLIKCLPIFCLWLFLLAHGLGFLLAHPSATRIFVGLVFSAVGDAFLIWQDQGYFVHGLLMFAVTHMFYASAFGMQPLALRTGLVMAALSGLCYALLYPCLSGAFTYLVGVYVALIGFMGWRAMAGLRLAGADWRWTELAAGSGALFFIISDLTIALNKFCFPVPYSRALIMSTYYVAQMLVALSAVESREPVEHYRLTKAN.

Over 1–21 (MVSPVTVVKSEGPKLVPFFKA) the chain is Cytoplasmic. A helical transmembrane segment spans residues 22-42 (TCVYFVLWLPSSSPSWVSTLI). A topological domain (extracellular) is located at residue lysine 43. Residues 44–64 (CLPIFCLWLFLLAHGLGFLLA) form a helical membrane-spanning segment. Over 65-70 (HPSATR) the chain is Cytoplasmic. The helical transmembrane segment at 71 to 91 (IFVGLVFSAVGDAFLIWQDQG) threads the bilayer. Tyrosine 92 is a topological domain (extracellular). Residues 93–113 (FVHGLLMFAVTHMFYASAFGM) form a helical membrane-spanning segment. Residues 114-115 (QP) are Cytoplasmic-facing. A helical membrane pass occupies residues 116–136 (LALRTGLVMAALSGLCYALLY). Topologically, residues 137 to 138 (PC) are extracellular. A helical transmembrane segment spans residues 139-159 (LSGAFTYLVGVYVALIGFMGW). At 160-174 (RAMAGLRLAGADWRW) the chain is on the cytoplasmic side. Residues 175–195 (TELAAGSGALFFIISDLTIAL) form a helical membrane-spanning segment. Over 196 to 206 (NKFCFPVPYSR) the chain is Extracellular. The helical transmembrane segment at 207 to 227 (ALIMSTYYVAQMLVALSAVES) threads the bilayer. Over 228–240 (REPVEHYRLTKAN) the chain is Cytoplasmic.

This sequence belongs to the TMEM86 family. As to expression, expressed in the macrophages.

Its subcellular location is the endoplasmic reticulum membrane. It catalyses the reaction a 1-O-(1Z-alkenyl)-sn-glycero-3-phosphocholine + H2O = a 2,3-saturated aldehyde + sn-glycerol 3-phosphocholine. It carries out the reaction a 1-O-(1Z-alkenyl)-sn-glycero-3-phosphoethanolamine + H2O = a 2,3-saturated aldehyde + sn-glycero-3-phosphoethanolamine. Functionally, catalyzes the hydrolysis of the vinyl ether bond of choline or ethanolamine lysoplasmalogens, forming fatty aldehyde and glycerophosphocholine or glycerophosphoethanolamine, respectively and is specific for the sn-2-deacylated (lyso) form of plasmalogen. Plays an important role in lysoplasmalogen metabolism in the adipocyte tissue and macrophages. In Homo sapiens (Human), this protein is Lysoplasmalogenase TMEM86A (TMEM86A).